A 502-amino-acid chain; its full sequence is Glutamate--tRNA ligase (502 aa).

The short motif at 9-19 is the 'HIGH' region element; sequence PSPTGDPHVGT. 4 residues coordinate Zn(2+): cysteine 106, cysteine 108, cysteine 133, and histidine 135. The 'KMSKS' region signature appears at 250-254; it reads KLSKR. ATP is bound at residue lysine 253.

This sequence belongs to the class-I aminoacyl-tRNA synthetase family. Glutamate--tRNA ligase type 1 subfamily. As to quaternary structure, monomer. Requires Zn(2+) as cofactor.

The protein resides in the cytoplasm. It catalyses the reaction tRNA(Glu) + L-glutamate + ATP = L-glutamyl-tRNA(Glu) + AMP + diphosphate. Catalyzes the attachment of glutamate to tRNA(Glu) in a two-step reaction: glutamate is first activated by ATP to form Glu-AMP and then transferred to the acceptor end of tRNA(Glu). The protein is Glutamate--tRNA ligase of Protochlamydia amoebophila (strain UWE25).